The sequence spans 497 residues: Cytochrome P450 98A8 (497 aa).

Residues 2–19 (IIYLISLLPIIVATLMLY) traverse the membrane as a helical segment. Residue Cys431 coordinates heme.

Belongs to the cytochrome P450 family. Heme serves as cofactor. Strongly expressed in inflorescence tips, young flower buds, seeds, stamen, tapetum and pollen.

The protein resides in the membrane. Acts redundantly with CYP98A9 as tricoumaroylspermidine meta-hydroxylase. Also catalyzes the meta-hydroxylation of the three triferuloylspermidine phenolic rings. Unable to use 5-O-(4-coumaroyl) D-quinate or 5-O-(4-coumaroyl) shikimate as substrates. This Arabidopsis thaliana (Mouse-ear cress) protein is Cytochrome P450 98A8 (CYP98A8).